The following is a 416-amino-acid chain: ORC1-type DNA replication protein 9 (416 aa).

Residues 79–83 (SGKSL), Tyr-226, and Arg-238 each bind ATP.

It belongs to the CDC6/cdc18 family.

Its function is as follows. Involved in regulation of DNA replication. The protein is ORC1-type DNA replication protein 9 (cdc6i) of Haloarcula marismortui (strain ATCC 43049 / DSM 3752 / JCM 8966 / VKM B-1809) (Halobacterium marismortui).